A 308-amino-acid chain; its full sequence is MKITFLGTGAAIPTKYRAHPSISLKFDGEIFLFDCGENTQRQIIFTDVSPMKINNIFITHLHGDHVLGLPGLLQSIAFQGRKKPLNIYGPAETVKMIEHILGVGYHSIDYPINVHEISSKTPERIIFTNNYEVFSYPVVHSVPALAYVFKQVKKPRMDLEKVKKLGIEIGPDLKRLKDGFNVELNGEIITLNDVTLPPKKGICVGYSGDTIPLKEFAEFLKELKCNTLIHEATFDKTMERNAKETLHSTATDALNIAKLSGVSTVLLTHISARYDNLNAFENEIVEFKAENPEIHVLIAEDLMEYSLK.

The Zn(2+) site is built by His-60, His-62, Asp-64, His-65, His-140, Asp-209, and His-269. Catalysis depends on Asp-64, which acts as the Proton acceptor.

Belongs to the RNase Z family. Homodimer. Zn(2+) serves as cofactor.

It carries out the reaction Endonucleolytic cleavage of RNA, removing extra 3' nucleotides from tRNA precursor, generating 3' termini of tRNAs. A 3'-hydroxy group is left at the tRNA terminus and a 5'-phosphoryl group is left at the trailer molecule.. Functionally, zinc phosphodiesterase, which displays some tRNA 3'-processing endonuclease activity. Probably involved in tRNA maturation, by removing a 3'-trailer from precursor tRNA. In Methanococcus maripaludis (strain DSM 14266 / JCM 13030 / NBRC 101832 / S2 / LL), this protein is Ribonuclease Z.